The following is a 281-amino-acid chain: Release factor glutamine methyltransferase (281 aa).

Positions 141 and 185 each coordinate S-adenosyl-L-methionine. 185-188 (NPPY) is a binding site for substrate.

It belongs to the protein N5-glutamine methyltransferase family. PrmC subfamily.

The catalysed reaction is L-glutaminyl-[peptide chain release factor] + S-adenosyl-L-methionine = N(5)-methyl-L-glutaminyl-[peptide chain release factor] + S-adenosyl-L-homocysteine + H(+). Methylates the class 1 translation termination release factors RF1/PrfA and RF2/PrfB on the glutamine residue of the universally conserved GGQ motif. The sequence is that of Release factor glutamine methyltransferase from Mycolicibacterium smegmatis (strain ATCC 700084 / mc(2)155) (Mycobacterium smegmatis).